The chain runs to 27 residues: Small ribosomal subunit protein bTHX (27 aa).

Over residues 1–13 the composition is skewed to basic residues; the sequence is MGKGDRRTRRGKI. The tract at residues 1 to 27 is disordered; the sequence is MGKGDRRTRRGKIWRGTYGKYRPRKKK.

This sequence belongs to the bacterial ribosomal protein bTHX family. As to quaternary structure, part of the 30S ribosomal subunit.

Binds at the top of the head of the 30S subunit. It stabilizes a number of different RNA elements and thus is important for subunit structure. This is Small ribosomal subunit protein bTHX (rpsU) from Thermus aquaticus.